A 143-amino-acid chain; its full sequence is Small ribosomal subunit protein uS12 (143 aa).

Positions 1–19 (MGKPRGIRTARKHVNHRRE) are enriched in basic residues. The interval 1-21 (MGKPRGIRTARKHVNHRREQR) is disordered. Pro62 bears the Hydroxyproline mark.

It belongs to the universal ribosomal protein uS12 family. Component of the 40S small ribosomal subunit.

It localises to the cytoplasm. It is found in the cytosol. Its subcellular location is the rough endoplasmic reticulum. The chain is Small ribosomal subunit protein uS12 (RpS23) from Papilio dardanus (African swallowtail butterfly).